We begin with the raw amino-acid sequence, 144 residues long: Large ribosomal subunit protein uL15 (144 aa).

A disordered region spans residues 1–57; the sequence is MELNNIKPADGAKKDKRRVGRGIGSGLGKTAGRGHKGQKSRAGGFHKVGFEGGQMPM. Residues 21–31 show a composition bias toward gly residues; it reads RGIGSGLGKTA.

The protein belongs to the universal ribosomal protein uL15 family. In terms of assembly, part of the 50S ribosomal subunit.

Its function is as follows. Binds to the 23S rRNA. In Thiobacillus denitrificans (strain ATCC 25259 / T1), this protein is Large ribosomal subunit protein uL15.